The sequence spans 634 residues: CREB-regulated transcription coactivator 1 (634 aa).

S64 and S113 each carry phosphoserine. Disordered regions lie at residues 110–174 (RLGS…GSQD), 191–221 (TTSE…VPGI), 258–331 (LPTP…TLSP), and 357–479 (QAGS…HTST). Position 149 is a phosphothreonine (T149). The residue at position 151 (S151) is a Phosphoserine; by SIK1 and SIK2. The segment covering 151 to 174 (SDSALHQSTMTPTQPESFSSGSQD) has biased composition (polar residues). T161 bears the Phosphothreonine mark. Residues 194–208 (EADKNLSKQAWDTKK) show a composition bias toward basic and acidic residues. The Nuclear export signal motif lies at 242–258 (TGGSLPDLTNIHFPSPL). Polar residues-rich tracts occupy residues 271 to 283 (ALSS…NLAA), 296 to 305 (GMSTPGSSPQ), and 314 to 331 (LSLS…TLSP). The segment covering 362–397 (QPPPQPQPPPPPPPASQQPPPPPPPQAPVRLPPGGP) has biased composition (pro residues). Residues 446–479 (QYRTSAGSPANQSPTSPVSNQGFSPGSSPQHTST) are compositionally biased toward polar residues.

This sequence belongs to the TORC family. Binds, as a tetramer, through its N-terminal region, with the bZIP domain of CREB1. 'Arg-314' in the bZIP domain of CREB1 is essential for this interaction. Interaction, via its C-terminal, with TAF4, enhances recruitment of TAF4 to CREB1. Interacts with 14-3-3 proteins, including YWHAE/14-3-3 epsilon. Interacts with calmodulin-dependent catalytic subunit PPP3CA/calcineurin A. In terms of assembly, (Microbial infection) Interacts with HTLV1 Tax. In terms of processing, phosphorylation/dephosphorylation states of Ser-151 are required for regulating transduction of CREB activity. TORCs are inactive when phosphorylated, and active when dephosphorylated at this site. This primary site of phosphorylation is mediated by SIKs (SIK1 and SIK2), is regulated by cAMP and calcium levels and is dependent on the phosphorylation of SIKs by LKB1. Highly expressed in adult and fetal brain. Located to specific regions such as the prefrontal cortex and cerebellum. Very low expression in other tissues such as heart, spleen, lung, skeletal muscle, salivary gland, ovary and kidney.

The protein localises to the cytoplasm. It is found in the nucleus. Transcriptional coactivator for CREB1 which activates transcription through both consensus and variant cAMP response element (CRE) sites. Acts as a coactivator, in the SIK/TORC signaling pathway, being active when dephosphorylated and acts independently of CREB1 'Ser-133' phosphorylation. Enhances the interaction of CREB1 with TAF4. Regulates the expression of specific CREB-activated genes such as the steroidogenic gene, StAR. Potent coactivator of PGC1alpha and inducer of mitochondrial biogenesis in muscle cells. In the hippocampus, involved in late-phase long-term potentiation (L-LTP) maintenance at the Schaffer collateral-CA1 synapses. May be required for dendritic growth of developing cortical neurons. In concert with SIK1, regulates the light-induced entrainment of the circadian clock. In response to light stimulus, coactivates the CREB-mediated transcription of PER1 which plays an important role in the photic entrainment of the circadian clock. Functionally, (Microbial infection) Plays a role of coactivator for TAX activation of the human T-cell leukemia virus type 1 (HTLV-1) long terminal repeats (LTR). The protein is CREB-regulated transcription coactivator 1 of Homo sapiens (Human).